The sequence spans 45 residues: Proteinase inhibitor IIA (45 aa).

3 disulfides stabilise this stretch: Cys10-Cys24, Cys14-Cys35, and Cys20-Cys43.

It belongs to the protease inhibitor I20 (potato type II proteinase inhibitor) family.

It localises to the secreted. In terms of biological role, inhibits trypsin strongly and chymotrypsin temporarily. This Solanum tuberosum (Potato) protein is Proteinase inhibitor IIA.